Here is a 134-residue protein sequence, read N- to C-terminus: Small ribosomal subunit protein uS11 (134 aa).

It belongs to the universal ribosomal protein uS11 family. In terms of assembly, part of the 30S ribosomal subunit. Interacts with proteins S7 and S18. Binds to IF-3.

Located on the platform of the 30S subunit, it bridges several disparate RNA helices of the 16S rRNA. Forms part of the Shine-Dalgarno cleft in the 70S ribosome. This Paraburkholderia xenovorans (strain LB400) protein is Small ribosomal subunit protein uS11.